Reading from the N-terminus, the 152-residue chain is Complexin (152 aa).

The interval 1–119 is disordered; the sequence is MAAFIAKQMV…EEEDDDEFAK (119 aa). The span at 23-39 shows a compositional bias: acidic residues; sequence DEGEKEGNENAEEEAAA. Basic and acidic residues-rich tracts occupy residues 41 to 82 and 90 to 104; these read EEAR…VKEE and DEGR…KEEL. The tract at residues 59-75 is interaction with the SNARE complex; it reads EEEREEMRQTIRDKYGL. Cysteine 149 bears the Cysteine methyl ester mark. Cysteine 149 carries the S-farnesyl cysteine lipid modification. Residues 150-152 constitute a propeptide, removed in mature form; sequence SLQ.

Belongs to the complexin/synaphin family. As to quaternary structure, binds to the SNARE core complex containing SNAP25, synaptobrevin and syntaxin-1.

The protein localises to the membrane. The protein resides in the cytoplasm. Its subcellular location is the cytosol. Functionally, positively regulates a late step in synaptic vesicle exocytosis. The sequence is that of Complexin (cpx) from Doryteuthis pealeii (Longfin inshore squid).